We begin with the raw amino-acid sequence, 174 residues long: Small hydrophobic protein (174 aa).

Residues V33–V53 form a helical membrane-spanning segment. N165 carries N-linked (GlcNAc...) asparagine; by host glycosylation.

It localises to the membrane. This Meleagris gallopavo (Wild turkey) protein is Small hydrophobic protein (SH).